Reading from the N-terminus, the 1004-residue chain is Translation initiation factor IF-2 (1004 aa).

The interval 36–393 (SSTIEPPVVK…RQKRNEYESM (358 aa)) is disordered. 2 stretches are compositionally biased toward low complexity: residues 62–157 (AAKP…AKPA) and 173–183 (AAKPGAEAPRP). Composition is skewed to pro residues over residues 184 to 196 (GGMPRPMGKPAPK) and 219 to 236 (PRPGGGPRPGGGPRPGGG). Gly residues-rich tracts occupy residues 237–249 (PRPQGQGRPGGQR) and 261–277 (GNRGGQRQGAGAGGPRP). Over residues 279-303 (GGPRPQGGSRPQGGSAQGAQGAPSQ) the composition is skewed to low complexity. Residues 330 to 373 (GKGGRGGQAGGGAGGGFNRGGGTGGGAGRGGRRGGTAGAFGRPG) show a composition bias toward gly residues. A compositionally biased stretch (basic residues) spans 377–386 (RRGRKSKRQK). The tr-type G domain maps to 499 to 671 (KRPPVVTVMG…VCLTADAELD (173 aa)). Residues 508–515 (GHVDHGKT) are G1. 508–515 (GHVDHGKT) is a binding site for GTP. Residues 533-537 (GITQG) form a G2 region. The segment at 558–561 (DTPG) is G3. GTP contacts are provided by residues 558-562 (DTPGH) and 612-615 (NKID). Residues 612 to 615 (NKID) form a G4 region. Residues 648-650 (SAK) are G5.

Belongs to the TRAFAC class translation factor GTPase superfamily. Classic translation factor GTPase family. IF-2 subfamily.

It is found in the cytoplasm. Functionally, one of the essential components for the initiation of protein synthesis. Protects formylmethionyl-tRNA from spontaneous hydrolysis and promotes its binding to the 30S ribosomal subunits. Also involved in the hydrolysis of GTP during the formation of the 70S ribosomal complex. This is Translation initiation factor IF-2 from Corynebacterium glutamicum (strain ATCC 13032 / DSM 20300 / JCM 1318 / BCRC 11384 / CCUG 27702 / LMG 3730 / NBRC 12168 / NCIMB 10025 / NRRL B-2784 / 534).